The chain runs to 152 residues: Mediator of RNA polymerase II transcription subunit 9 (152 aa).

Residues 98 to 150 (IKRCKALLQENEEVRNLLANSIEEWENIIADKEQQLRVKAKVLRDLDARIEKI) are a coiled coil.

It belongs to the Mediator complex subunit 9 family. In terms of assembly, component of the Mediator complex.

The protein localises to the nucleus. In terms of biological role, component of the Mediator complex, a coactivator involved in the regulated transcription of nearly all RNA polymerase II-dependent genes. Mediator functions as a bridge to convey information from gene-specific regulatory proteins to the basal RNA polymerase II transcription machinery. Mediator is recruited to promoters by direct interactions with regulatory proteins and serves as a scaffold for the assembly of a functional preinitiation complex with RNA polymerase II and the general transcription factors. The sequence is that of Mediator of RNA polymerase II transcription subunit 9 (CSE2) from Candida glabrata (strain ATCC 2001 / BCRC 20586 / JCM 3761 / NBRC 0622 / NRRL Y-65 / CBS 138) (Yeast).